A 112-amino-acid chain; its full sequence is T cell receptor alpha variable 12-1 (112 aa).

A signal peptide spans Met-1–Ser-20. The Ig-like domain maps to Lys-23–Asn-112. A glycan (N-linked (GlcNAc...) asparagine) is linked at Asn-43. A disulfide bond links Cys-44 and Cys-109.

Alpha-beta TR is a heterodimer composed of an alpha and beta chain; disulfide-linked. The alpha-beta TR is associated with the transmembrane signaling CD3 coreceptor proteins to form the TR-CD3 (TcR or TCR). The assembly of alpha-beta TR heterodimers with CD3 occurs in the endoplasmic reticulum where a single alpha-beta TR heterodimer associates with one CD3D-CD3E heterodimer, one CD3G-CD3E heterodimer and one CD247 homodimer forming a stable octameric structure. CD3D-CD3E and CD3G-CD3E heterodimers preferentially associate with TR alpha and TR beta chains, respectively. The association of the CD247 homodimer is the last step of TcR assembly in the endoplasmic reticulum and is required for transport to the cell surface.

The protein localises to the cell membrane. V region of the variable domain of T cell receptor (TR) alpha chain that participates in the antigen recognition. Alpha-beta T cell receptors are antigen specific receptors which are essential to the immune response and are present on the cell surface of T lymphocytes. Recognize peptide-major histocompatibility (MH) (pMH) complexes that are displayed by antigen presenting cells (APC), a prerequisite for efficient T cell adaptive immunity against pathogens. Binding of alpha-beta TR to pMH complex initiates TR-CD3 clustering on the cell surface and intracellular activation of LCK that phosphorylates the ITAM motifs of CD3G, CD3D, CD3E and CD247 enabling the recruitment of ZAP70. In turn ZAP70 phosphorylates LAT, which recruits numerous signaling molecules to form the LAT signalosome. The LAT signalosome propagates signal branching to three major signaling pathways, the calcium, the mitogen-activated protein kinase (MAPK) kinase and the nuclear factor NF-kappa-B (NF-kB) pathways, leading to the mobilization of transcription factors that are critical for gene expression and essential for T cell growth and differentiation. The T cell repertoire is generated in the thymus, by V-(D)-J rearrangement. This repertoire is then shaped by intrathymic selection events to generate a peripheral T cell pool of self-MH restricted, non-autoaggressive T cells. Post-thymic interaction of alpha-beta TR with the pMH complexes shapes TR structural and functional avidity. This is T cell receptor alpha variable 12-1 from Homo sapiens (Human).